The following is a 301-amino-acid chain: tRNA dimethylallyltransferase (301 aa).

Position 9–16 (9–16) interacts with ATP; that stretch reads GPTASGKS. Residue 11–16 coordinates substrate; it reads TASGKS. The interaction with substrate tRNA stretch occupies residues 34–37; that stretch reads DSMQ.

It belongs to the IPP transferase family. In terms of assembly, monomer. The cofactor is Mg(2+).

It catalyses the reaction adenosine(37) in tRNA + dimethylallyl diphosphate = N(6)-dimethylallyladenosine(37) in tRNA + diphosphate. Catalyzes the transfer of a dimethylallyl group onto the adenine at position 37 in tRNAs that read codons beginning with uridine, leading to the formation of N6-(dimethylallyl)adenosine (i(6)A). The sequence is that of tRNA dimethylallyltransferase from Corynebacterium glutamicum (strain R).